The primary structure comprises 552 residues: Undecaprenyl phosphate-alpha-4-amino-4-deoxy-L-arabinose arabinosyl transferase (552 aa).

11 helical membrane passes run 4–24 (IAGWFTLAVLFVLYYIVPLPG), 81–101 (FAVRFGAVLATVLSALLVFWL), 113–133 (VVAVLIYLTSFLVYGVGSYAV), 176–196 (FMTKGFLALAIPVIAVLPWVI), 207–227 (FGPLAVLSAILISLPWVLAIA), 255–275 (APFWYYLPILLIGLLPWLGLL), 289–309 (QGGDFYLLGWAVMPFLLFSIA), 313–333 (LPTYILPCFAPLAILMAGYVQ), 351–371 (LLVGLGGMAAILLVLAPWGIT), 384–404 (VILGTIAFGVWALFGALSLYH), and 411–431 (WSAACLLGVALLIGTALPQQV).

The protein belongs to the glycosyltransferase 83 family.

It is found in the cell inner membrane. The catalysed reaction is 4-amino-4-deoxy-alpha-L-arabinopyranosyl di-trans,octa-cis-undecaprenyl phosphate + lipid IVA = lipid IIA + di-trans,octa-cis-undecaprenyl phosphate.. Its pathway is lipopolysaccharide metabolism; 4-amino-4-deoxy-beta-L-arabinose-lipid A biosynthesis. Functionally, catalyzes the transfer of the L-Ara4N moiety of the glycolipid undecaprenyl phosphate-alpha-L-Ara4N to lipid A. The modified arabinose is attached to lipid A and is required for resistance to polymyxin and cationic antimicrobial peptides. This Edwardsiella ictaluri (strain 93-146) protein is Undecaprenyl phosphate-alpha-4-amino-4-deoxy-L-arabinose arabinosyl transferase.